A 219-amino-acid chain; its full sequence is Proline-rich protein 27 (219 aa).

An N-terminal signal peptide occupies residues 1 to 15; the sequence is MKLLLWACIVCVAFA. The span at 155–204 shows a compositional bias: low complexity; that stretch reads AAEPAAEAPVGAEPAAEAPVAAEPAAEAPVGVEPAAEEPSPAEPATAKPA. Residues 155-219 are disordered; the sequence is AAEPAAEAPV…PSPSLEQANQ (65 aa).

It localises to the secreted. In Homo sapiens (Human), this protein is Proline-rich protein 27 (PRR27).